Here is a 750-residue protein sequence, read N- to C-terminus: Circadian input-output histidine kinase CikA (750 aa).

Residues 1-173 form an N-terminal domain region; it reads MLPAFSPIFR…QVIAQIRQSL (173 aa). The GAF domain stretch occupies residues 174–333; that stretch reads DLSEILNNAV…KNFLGQIGEH (160 aa). Positions 385-609 constitute a Histidine kinase domain; the sequence is NISHELRTPL…IFTTVIPQQN (225 aa). His388 carries the post-translational modification Phosphohistidine; by autocatalysis. A psR domain, bind KaiB(fs) region spans residues 604-750; the sequence is VIPQQNFPPT…VQSIQQEPLR (147 aa). Positions 631–745 constitute a Response regulatory domain; it reads SVIVIEQDEE…LLLQRVQSIQ (115 aa). Position 680 is a 4-aspartylphosphate (Asp680).

It in the N-terminal section; belongs to the phytochrome family. As to quaternary structure, homodimer. Part of the circadian clock (KaiA, KaiB, KaiC, CikA, RpaA, SasA), the composition of which varies during the circadian cycle. KaiA and CikA compete for binding to KaiB(fs). Interacts with RpaA.

It carries out the reaction ATP + protein L-histidine = ADP + protein N-phospho-L-histidine.. Its function is as follows. Functions in an input pathway to the Kai circadian clock. Senses oxidized quinones via its C-terminal pseudo-receiver domain, providing a link between cell metabolism and the clock. Affects the ratio of phosphorylated to unphosphorylated KaiC, binds quinones via its pseudo-receptor domain. Quinone-binding destabilizes the protein rapidly. Autophosphorylates, does not transfer the phosphate to its pseudo-receiver (PsR) domain. May play a role in cell division. Also functions in a two-component CikA/RpaA output pathway from the circadian clock, negatively regulating kaiBC expression independently of labA and of sasA. One of three clock output pathways. Dephosphorylates phospho-RpaA, enhanced by KaiB and KaiC, has only modest kinase activity on RpaA. In Synechocystis sp. (strain ATCC 27184 / PCC 6803 / Kazusa), this protein is Circadian input-output histidine kinase CikA.